A 476-amino-acid polypeptide reads, in one-letter code: Efflux pump atB (476 aa).

The tract at residues Met-1–Ile-38 is disordered. Helical transmembrane passes span Leu-69–Leu-89, Lys-96–Ala-116, Phe-127–Leu-147, Trp-186–Val-206, Leu-264–Phe-284, Phe-294–Ile-314, Leu-347–Thr-367, Val-372–Phe-392, Tyr-403–Phe-425, and Trp-440–Tyr-460.

The protein belongs to the major facilitator superfamily.

The protein localises to the cell membrane. Functionally, efflux pump that might be required for efficient secretion of terreic acid. This is Efflux pump atB from Aspergillus terreus (strain NIH 2624 / FGSC A1156).